The sequence spans 262 residues: tRNA pseudouridine synthase A (262 aa).

Residue Asp51 is the Nucleophile of the active site. Substrate is bound at residue Tyr109.

It belongs to the tRNA pseudouridine synthase TruA family. In terms of assembly, homodimer.

The enzyme catalyses uridine(38/39/40) in tRNA = pseudouridine(38/39/40) in tRNA. In terms of biological role, formation of pseudouridine at positions 38, 39 and 40 in the anticodon stem and loop of transfer RNAs. In Dechloromonas aromatica (strain RCB), this protein is tRNA pseudouridine synthase A.